The chain runs to 382 residues: Intermediate transcription factor 3 large subunit (382 aa).

It belongs to the poxviruses A23 family. In terms of assembly, heterodimer of a 45 kDa and a 32 kDa subunit.

Acts with RNA polymerase to initiate transcription from intermediate gene promoters. This Oryctolagus cuniculus (Rabbit) protein is Intermediate transcription factor 3 large subunit (VITF3L).